The chain runs to 485 residues: MARALMFQGTGSDVGKSLLVAGLARAFADRGLKVRPFKPQNMSNNAAVTADGGEIGRAQALQARAARVPLSVHMNPVLLKPQSEVGAQVVVQGRVVGSAKAAAYQQMKAGLLPSVLESFRRLKTEADLVLVEGAGSASEVNLRANDIANMGFARAADVPVVLIGDIDRGGVIASLVGTKTVLDPADAAMIQGFIVNRFRGDPALFGSGMDLIAGHTGWAALGLVPFYTGAARLPAEDALGVAGPQAPKPGAKVRIAVPILPHVANFDDLDPLDAEPGLEVRRIRPSDVLPTDTDLVLLIGSKATIADLAALRAGGLHHDIQAFARRGGRVLGLCGGYQMMGEHLSDPDGVEGPPGSTEGLGLLKVGTVMTGEKRLVAVTGTSRLGAPFSGYEMHIGATEGADTARPFAELDGAGAEGAVSADGRIMGTYVHGLFGDDRQRAALMGLLGAGPAQVAYEAGVEEALDGLAAHLSAHLDLDRLLSLAR.

One can recognise a GATase cobBQ-type domain in the interval 252–439; the sequence is KVRIAVPILP…VHGLFGDDRQ (188 aa). Cys-334 functions as the Nucleophile in the catalytic mechanism. The active site involves His-431.

The protein belongs to the CobB/CobQ family. CobQ subfamily.

Its pathway is cofactor biosynthesis; adenosylcobalamin biosynthesis. Functionally, catalyzes amidations at positions B, D, E, and G on adenosylcobyrinic A,C-diamide. NH(2) groups are provided by glutamine, and one molecule of ATP is hydrogenolyzed for each amidation. This is Cobyric acid synthase from Azorhizobium caulinodans (strain ATCC 43989 / DSM 5975 / JCM 20966 / LMG 6465 / NBRC 14845 / NCIMB 13405 / ORS 571).